The following is a 146-amino-acid chain: Hemoglobin subunit beta (146 aa).

Valine 1 bears the N-acetylvaline mark. In terms of domain architecture, Globin spans 2–146; that stretch reads HLTAEEKSAV…VANALAHKYH (145 aa). At threonine 12 the chain carries Phosphothreonine. Residue lysine 59 is modified to N6-acetyllysine. Histidine 63 provides a ligand contact to heme b. Lysine 82 carries the N6-acetyllysine modification. Residue histidine 92 coordinates heme b. Cysteine 93 carries the post-translational modification S-nitrosocysteine. Residue lysine 144 is modified to N6-acetyllysine.

It belongs to the globin family. As to quaternary structure, heterotetramer of two alpha chains and two beta chains. As to expression, red blood cells.

Functionally, involved in oxygen transport from the lung to the various peripheral tissues. In Balaenoptera acutorostrata (Common minke whale), this protein is Hemoglobin subunit beta (HBB).